A 284-amino-acid chain; its full sequence is MAEITAKMVADLRAATGLGMMECKKALVEAEGNFDKAEEILRIKSGAKAGKLAGRTAAEGVLAYAINGNVGALVEVNCETDFVAKDAGFVEFANFVAKTAAEKKPASVEELSELVESERKAIIAKLGENMSVRRFQVIDTANQLVAYIHGALATEGVLVEYKGSEDVARKIGMHIVAAKPQCVSEAEVDAETVEKERHIYTEQAIASGKPADIAAKMVEGRIRKFLAEITLNGQAFVMNPDQTVAQFAKENDTEVVSFIRYKVGDGIEKAVVDYAAEVAAAAKV.

The involved in Mg(2+) ion dislocation from EF-Tu stretch occupies residues 80–83 (TDFV).

Belongs to the EF-Ts family.

It is found in the cytoplasm. In terms of biological role, associates with the EF-Tu.GDP complex and induces the exchange of GDP to GTP. It remains bound to the aminoacyl-tRNA.EF-Tu.GTP complex up to the GTP hydrolysis stage on the ribosome. The protein is Elongation factor Ts of Neisseria gonorrhoeae (strain ATCC 700825 / FA 1090).